A 439-amino-acid polypeptide reads, in one-letter code: Proline--tRNA ligase (439 aa).

This sequence belongs to the class-II aminoacyl-tRNA synthetase family. ProS type 2 subfamily. Homodimer.

It is found in the cytoplasm. The catalysed reaction is tRNA(Pro) + L-proline + ATP = L-prolyl-tRNA(Pro) + AMP + diphosphate. Its function is as follows. Catalyzes the attachment of proline to tRNA(Pro) in a two-step reaction: proline is first activated by ATP to form Pro-AMP and then transferred to the acceptor end of tRNA(Pro). This Rhodopseudomonas palustris (strain HaA2) protein is Proline--tRNA ligase.